Consider the following 107-residue polypeptide: SH3 domain-binding glutamic acid-rich-like protein 2 (107 aa).

An SH3-binding motif is present at residues 61-67 (QGNPLPP).

The protein belongs to the SH3BGR family. As to expression, highly expressed in brain, placenta, liver and kidney. Expressed in retina.

Its subcellular location is the nucleus. The protein is SH3 domain-binding glutamic acid-rich-like protein 2 (SH3BGRL2) of Homo sapiens (Human).